We begin with the raw amino-acid sequence, 224 residues long: Ribosomal RNA small subunit methyltransferase G (224 aa).

S-adenosyl-L-methionine-binding positions include G89, L94, 140–141, and R154; that span reads IE.

It belongs to the methyltransferase superfamily. RNA methyltransferase RsmG family.

The protein localises to the cytoplasm. The enzyme catalyses guanosine(527) in 16S rRNA + S-adenosyl-L-methionine = N(7)-methylguanosine(527) in 16S rRNA + S-adenosyl-L-homocysteine. Its function is as follows. Specifically methylates the N7 position of guanine in position 527 of 16S rRNA. The chain is Ribosomal RNA small subunit methyltransferase G from Bordetella avium (strain 197N).